The following is a 438-amino-acid chain: Coenzyme A disulfide reductase (438 aa).

Glycine 8–glutamate 33 contacts FAD. The substrate site is built by threonine 15, glutamine 19, arginine 22, serine 39, and asparagine 42. Cysteine 43 functions as the Nucleophile in the catalytic mechanism. The active-site Redox-active is cysteine 43. Residue lysine 71 coordinates substrate. Residue valine 151–asparagine 166 coordinates NADP(+). Threonine 267–aspartate 277 contacts FAD. Histidine 299 is a substrate binding site. Tyrosine 419 is a binding site for FAD. Lysine 427 is a substrate binding site.

The protein belongs to the class-III pyridine nucleotide-disulfide oxidoreductase family. As to quaternary structure, homodimer. It depends on FAD as a cofactor.

The enzyme catalyses NADP(+) + 2 CoA = CoA-disulfide + NADPH + H(+). Catalyzes specifically the NADPH-dependent reduction of coenzyme A disulfide. This is Coenzyme A disulfide reductase from Staphylococcus aureus (strain MRSA252).